We begin with the raw amino-acid sequence, 574 residues long: Desiccation/radiation resistance protein DR_1769 (574 aa).

Residues 1–33 (MPDPAARRFSLPPFPLAALALSVALLGAPASLA) form the signal peptide. Residues 400 to 438 (TAQTQARQAAAAASTSQQPRLPTLAQAPAPTPAPAQTTP) show a composition bias toward low complexity. The interval 400 to 461 (TAQTQARQAA…APVPPVASPA (62 aa)) is disordered. A compositionally biased stretch (pro residues) spans 439 to 459 (RPQPTPAQPATPAAPVPPVAS).

Plays an important role in resistance to desiccation and radiation, maybe by protecting genome integrity under extreme conditions. The sequence is that of Desiccation/radiation resistance protein DR_1769 from Deinococcus radiodurans (strain ATCC 13939 / DSM 20539 / JCM 16871 / CCUG 27074 / LMG 4051 / NBRC 15346 / NCIMB 9279 / VKM B-1422 / R1).